The following is a 622-amino-acid chain: Presenilin-A (622 aa).

The segment covering 1-16 (MKENEDEINKTDEKYK) has biased composition (basic and acidic residues). Disordered stretches follow at residues 1 to 65 (MKEN…NLEN) and 132 to 160 (VSEQ…DETE). Topologically, residues 1–168 (MKENEDEINK…TEVPELVDYS (168 aa)) are cytoplasmic. Residues 21 to 62 (SNNGNNKNKNNNNNNNNNNNNNNNNNNNNNNNNNNNNNGNSN) show a composition bias toward low complexity. Acidic residues predominate over residues 147–160 (DLDEDDDDDDDETE). A helical transmembrane segment spans residues 169–189 (EMIVSILYPVCITMVIVVLAI). Residues 190–227 (RAISSSTSKNSQIVEISNDNSGGNGDSSSGADKMVFDS) are Lumenal-facing. The helical transmembrane segment at 228 to 248 (VVNSLIFLAVIILSTTIMVVL) threads the bilayer. The Cytoplasmic segment spans residues 249–265 (YKFKLMKALYAWLMGTS). Residues 266-286 (ILLLGVFGGFLFLILLAYLNL) traverse the membrane as a helical segment. Residues 287-289 (GLD) lie on the Lumenal side of the membrane. A helical transmembrane segment spans residues 290–310 (YVTFVIVVWNFSVGGIVCIFW). A topological domain (cytoplasmic) is located at residue Tyr-311. The helical transmembrane segment at 312–332 (SPKLLNQGYLISISVLMALFF) threads the bilayer. Over 333-341 (SRLPDWTTW) the chain is Lumenal. The chain crosses the membrane as a helical span at residues 342–362 (GILSIVSIYDIFAVLCPGGPL). The active site involves Asp-351. Residues 363–538 (RILIETAQKR…SYVKPKQSIR (176 aa)) lie on the Cytoplasmic side of the membrane. Residues 419 to 477 (NNNNNEDENKNNTEDGNNNNNKNKNNNNNNNNRIENENGAENSSENGSITPPPTIPNFI) form a disordered region. Over residues 432 to 466 (EDGNNNNNKNKNNNNNNNNRIENENGAENSSENGS) the composition is skewed to low complexity. A helical transmembrane segment spans residues 539–559 (LGLGDFVFYSVLIGKAASYQI). The active site involves Asp-543. Residues 560-562 (TTV) are Lumenal-facing. The helical transmembrane segment at 563 to 583 (FTVFIAIITGLFLTLILLAVF) threads the bilayer. Residues 584-588 (RRALP) are Cytoplasmic-facing. The short motif at 588 to 590 (PAL) is the PAL element. Residues 589–609 (ALPMSIIFGIIVFFLTFKILI) constitute an intramembrane region (helical). Residues 610–622 (QYIYFLGENQIFV) are Cytoplasmic-facing.

The protein belongs to the peptidase A22A family. Homodimer. Component of the gamma-secretase complex, a complex composed of a presenilin homodimer, nicastrin, aph1 and pen2.

It is found in the endoplasmic reticulum membrane. The protein localises to the golgi apparatus membrane. Functionally, probable catalytic subunit of the gamma-secretase complex, an endoprotease complex that catalyzes the intramembrane cleavage of integral membrane proteins such as Notch receptors. Requires the other members of the gamma-secretase complex to have a protease activity. In Dictyostelium discoideum (Social amoeba), this protein is Presenilin-A (psenA).